The sequence spans 63 residues: Large ribosomal subunit protein bL35 (63 aa).

The protein belongs to the bacterial ribosomal protein bL35 family.

The sequence is that of Large ribosomal subunit protein bL35 from Sulfurimonas denitrificans (strain ATCC 33889 / DSM 1251) (Thiomicrospira denitrificans (strain ATCC 33889 / DSM 1251)).